Consider the following 464-residue polypeptide: tRNA-2-methylthio-N(6)-dimethylallyladenosine synthase (464 aa).

One can recognise an MTTase N-terminal domain in the interval 4–119 (RTFHIMTFGC…APQAIERLVQ (116 aa)). Residues Cys13, Cys48, Cys82, Cys158, Cys162, and Cys165 each coordinate [4Fe-4S] cluster. In terms of domain architecture, Radical SAM core spans 144-375 (GEVPVSAYVN…QEVQNEYSEA (232 aa)). A TRAM domain is found at 378 to 461 (QAMVGKTVMV…KHSLTGEPAG (84 aa)). The tract at residues 393–420 (SPKSAAGSGTDAQNAAEESGRTASSWQG) is disordered.

This sequence belongs to the methylthiotransferase family. MiaB subfamily. Monomer. [4Fe-4S] cluster serves as cofactor.

The protein localises to the cytoplasm. It carries out the reaction N(6)-dimethylallyladenosine(37) in tRNA + (sulfur carrier)-SH + AH2 + 2 S-adenosyl-L-methionine = 2-methylsulfanyl-N(6)-dimethylallyladenosine(37) in tRNA + (sulfur carrier)-H + 5'-deoxyadenosine + L-methionine + A + S-adenosyl-L-homocysteine + 2 H(+). Catalyzes the methylthiolation of N6-(dimethylallyl)adenosine (i(6)A), leading to the formation of 2-methylthio-N6-(dimethylallyl)adenosine (ms(2)i(6)A) at position 37 in tRNAs that read codons beginning with uridine. This is tRNA-2-methylthio-N(6)-dimethylallyladenosine synthase from Oleidesulfovibrio alaskensis (strain ATCC BAA-1058 / DSM 17464 / G20) (Desulfovibrio alaskensis).